Here is a 630-residue protein sequence, read N- to C-terminus: 1-deoxy-D-xylulose-5-phosphate synthase (630 aa).

Thiamine diphosphate contacts are provided by residues H80 and 121–123 (GHS). D152 serves as a coordination point for Mg(2+). Thiamine diphosphate contacts are provided by residues 153–154 (GA), N181, Y288, and E370. N181 contacts Mg(2+).

It belongs to the transketolase family. DXPS subfamily. Homodimer. It depends on Mg(2+) as a cofactor. The cofactor is thiamine diphosphate.

The enzyme catalyses D-glyceraldehyde 3-phosphate + pyruvate + H(+) = 1-deoxy-D-xylulose 5-phosphate + CO2. It participates in metabolic intermediate biosynthesis; 1-deoxy-D-xylulose 5-phosphate biosynthesis; 1-deoxy-D-xylulose 5-phosphate from D-glyceraldehyde 3-phosphate and pyruvate: step 1/1. In terms of biological role, catalyzes the acyloin condensation reaction between C atoms 2 and 3 of pyruvate and glyceraldehyde 3-phosphate to yield 1-deoxy-D-xylulose-5-phosphate (DXP). This is 1-deoxy-D-xylulose-5-phosphate synthase from Colwellia psychrerythraea (strain 34H / ATCC BAA-681) (Vibrio psychroerythus).